Reading from the N-terminus, the 59-residue chain is MAVPRNRHSNARKNIRRSHHAKKACSGAVCNNCKQVFIPHTVCASCGFYKGKAVVTVEK.

The interval 1–20 is disordered; it reads MAVPRNRHSNARKNIRRSHH.

This sequence belongs to the bacterial ribosomal protein bL32 family.

The chain is Large ribosomal subunit protein bL32 (rpmF) from Chlamydia muridarum (strain MoPn / Nigg).